The primary structure comprises 256 residues: tRNA (guanine-N(7)-)-methyltransferase (256 aa).

Residues 1–25 (MVATGGQAQDQSQNQEPDVLNPTSA) are disordered. Residues Gly79, 102-103 (EI), 137-138 (NA), and Leu157 each bind S-adenosyl-L-methionine. Residue Asp160 is part of the active site. S-adenosyl-L-methionine is bound at residue 235–237 (SEE).

This sequence belongs to the class I-like SAM-binding methyltransferase superfamily. TrmB family.

It localises to the nucleus. The catalysed reaction is guanosine(46) in tRNA + S-adenosyl-L-methionine = N(7)-methylguanosine(46) in tRNA + S-adenosyl-L-homocysteine. Its pathway is tRNA modification; N(7)-methylguanine-tRNA biosynthesis. Catalyzes the formation of N(7)-methylguanine at position 46 (m7G46) in tRNA. This Drosophila simulans (Fruit fly) protein is tRNA (guanine-N(7)-)-methyltransferase.